Here is a 329-residue protein sequence, read N- to C-terminus: 7,8-didemethyl-8-hydroxy-5-deazariboflavin synthase (329 aa).

Residues 6–244 (ITYTKNVFLP…EEISIQVAPN (239 aa)) enclose the Radical SAM core domain. [4Fe-4S] cluster contacts are provided by cysteine 20, cysteine 24, and cysteine 27.

It belongs to the radical SAM superfamily. CofG family. In terms of assembly, consists of two subunits, CofG and CofH. [4Fe-4S] cluster serves as cofactor.

It catalyses the reaction 5-amino-5-(4-hydroxybenzyl)-6-(D-ribitylimino)-5,6-dihydrouracil + S-adenosyl-L-methionine = 7,8-didemethyl-8-hydroxy-5-deazariboflavin + 5'-deoxyadenosine + L-methionine + NH4(+) + H(+). It participates in cofactor biosynthesis; coenzyme F0 biosynthesis. Functionally, catalyzes the radical-mediated synthesis of 7,8-didemethyl-8-hydroxy-5-deazariboflavin from 5-amino-5-(4-hydroxybenzyl)-6-(D-ribitylimino)-5,6-dihydrouracil. This is 7,8-didemethyl-8-hydroxy-5-deazariboflavin synthase from Methanoregula boonei (strain DSM 21154 / JCM 14090 / 6A8).